We begin with the raw amino-acid sequence, 1154 residues long: Diacylglycerol kinase eta (1154 aa).

Residues 1 to 54 (MAGAGYQHHPPGGAAVGTSAVSPTAAGPGEDSSDSEAEQGGPQKLIRKVSTSGQ) form a disordered region. The 94-residue stretch at 59 to 152 (TSIKEGQLLK…WISSLKSVQS (94 aa)) folds into the PH domain. 2 Phorbol-ester/DAG-type zinc fingers span residues 169–219 (MHNW…TNNC) and 241–292 (PHQW…HPVC). The DAGKc domain maps to 322 to 457 (FCVSPLLVFV…LDRWSIMTYE (136 aa)). 3 disordered regions span residues 560-608 (QASR…AVKP), 634-678 (DEQT…APEA), and 1123-1154 (FKME…SPGN). Acidic residues predominate over residues 573–586 (PEEDAVESSSEESL). Residues 656-667 (DDSKDNDTKESP) show a composition bias toward basic and acidic residues. The segment covering 1131 to 1154 (QKTSSQPGPGDTESGSYEANSPGN) has biased composition (polar residues).

Belongs to the eukaryotic diacylglycerol kinase family. As to quaternary structure, interacts with RAF1 and BRAF. In terms of processing, phosphorylated. Phosphorylation does not inhibit catalytic activity. As to expression, expressed in a wide variety of tissues. Most abundant in the brain and testis; also found in lung, spleen, and prostate (at protein level).

The protein localises to the cytoplasm. The protein resides in the cell membrane. The catalysed reaction is a 1,2-diacyl-sn-glycerol + ATP = a 1,2-diacyl-sn-glycero-3-phosphate + ADP + H(+). The enzyme catalyses 1,2-di-(9Z-octadecenoyl)-sn-glycerol + ATP = 1,2-di-(9Z-octadecenoyl)-sn-glycero-3-phosphate + ADP + H(+). Its pathway is lipid metabolism; glycerolipid metabolism. Functionally, diacylglycerol kinase that converts diacylglycerol/DAG into phosphatidic acid/phosphatidate/PA and regulates the respective levels of these two bioactive lipids. Thereby, acts as a central switch between the signaling pathways activated by these second messengers with different cellular targets and opposite effects in numerous biological processes. Plays a key role in promoting cell growth. Activates the Ras/B-Raf/C-Raf/MEK/ERK signaling pathway induced by EGF. Regulates the recruitment of RAF1 and BRAF from cytoplasm to membranes and their heterodimerization. This Mesocricetus auratus (Golden hamster) protein is Diacylglycerol kinase eta (DGKH).